The following is a 197-amino-acid chain: Imidazoleglycerol-phosphate dehydratase (197 aa).

It belongs to the imidazoleglycerol-phosphate dehydratase family.

Its subcellular location is the cytoplasm. The enzyme catalyses D-erythro-1-(imidazol-4-yl)glycerol 3-phosphate = 3-(imidazol-4-yl)-2-oxopropyl phosphate + H2O. The protein operates within amino-acid biosynthesis; L-histidine biosynthesis; L-histidine from 5-phospho-alpha-D-ribose 1-diphosphate: step 6/9. This is Imidazoleglycerol-phosphate dehydratase from Rhodopseudomonas palustris (strain HaA2).